The primary structure comprises 309 residues: Taste receptor type 2 member 31 (309 aa).

The Extracellular segment spans residues 1–2 (MI). Residues 3 to 23 (TFLPIIFSILVVVTFVIGNFA) traverse the membrane as a helical segment. Residues 24–55 (NGFIALVNSTEWVKRQKISFADQILTALAVSR) are Cytoplasmic-facing. The chain crosses the membrane as a helical span at residues 56 to 76 (VGLLWVLLLNWYATVLNPAFY). The Extracellular segment spans residues 77–100 (SVEVRTTTYNVWAVTNHFSNWLAT). The helical transmembrane segment at 101–121 (SLSIFYLLKIANFSNLIFLHL) threads the bilayer. Residues 122-126 (KRRVK) lie on the Cytoplasmic side of the membrane. The chain crosses the membrane as a helical span at residues 127–147 (NVILVMLLGPLLILACHLFMV). The Extracellular portion of the chain corresponds to 148-181 (NMNEIVRTKEYEENMTWKYILRNAIYHPGMTVTT). An N-linked (GlcNAc...) asparagine glycan is attached at asparagine 161. The chain crosses the membrane as a helical span at residues 182–202 (LQNLVPFTLTLISFLLLICSL). Residues 203-229 (CKHLKKMQLHGKGPQDPSTKVHIKALQ) are Cytoplasmic-facing. Residues 230-250 (IVISFLLLCVIYFVSVIISIW) form a helical membrane-spanning segment. Residues 251–259 (SFESLGNKP) are Extracellular-facing. The chain crosses the membrane as a helical span at residues 260 to 280 (VFMFCQAIRFSYPSAHPFIVI). Residues 281-309 (WGNKKLKQTFLSVLWNVRYWVKGQKPSSL) lie on the Cytoplasmic side of the membrane.

This sequence belongs to the G-protein coupled receptor T2R family.

It is found in the membrane. Functionally, receptor that may play a role in the perception of bitterness and is gustducin-linked. May play a role in sensing the chemical composition of the gastrointestinal content. The activity of this receptor may stimulate alpha gustducin, mediate PLC-beta-2 activation and lead to the gating of TRPM5. This Papio hamadryas (Hamadryas baboon) protein is Taste receptor type 2 member 31 (TAS2R31).